A 158-amino-acid chain; its full sequence is RNA pyrophosphohydrolase (158 aa).

In terms of domain architecture, Nudix hydrolase spans 6-150; the sequence is GYRLNVGIVL…KRDVYRKVMQ (145 aa). The Nudix box motif lies at 39-60; it reads GGINIGETPEQAMYRELFEEIG.

Belongs to the Nudix hydrolase family. RppH subfamily. The cofactor is a divalent metal cation.

Accelerates the degradation of transcripts by removing pyrophosphate from the 5'-end of triphosphorylated RNA, leading to a more labile monophosphorylated state that can stimulate subsequent ribonuclease cleavage. This is RNA pyrophosphohydrolase from Blochmanniella pennsylvanica (strain BPEN).